Reading from the N-terminus, the 73-residue chain is MKVKCLLAVFLIVLIAAEHCQALFFLPSLIGGLISAIKGRRKRELGTQFRPQQKNFMRREIDLERLFAEMPDY.

Positions 1 to 22 (MKVKCLLAVFLIVLIAAEHCQA) are cleaved as a signal peptide. Lys38 is modified (lysine amide). Residues 44 to 73 (ELGTQFRPQQKNFMRREIDLERLFAEMPDY) constitute a propeptide that is removed on maturation.

This sequence belongs to the non-disulfide-bridged peptide (NDBP) superfamily. Short antimicrobial peptide (group 4) family. As to expression, expressed by the venom gland.

Its subcellular location is the secreted. The protein localises to the target cell membrane. Functionally, cationic host defense peptide that have antibacterial activity by breaking membranes. Is more effective on Gram-positive than on Gram-negative bacteria. The sequence is that of Antimicrobial peptide 143 from Lychas mucronatus (Chinese swimming scorpion).